Here is a 166-residue protein sequence, read N- to C-terminus: Phosphopantetheine adenylyltransferase (166 aa).

Residue S9 coordinates substrate. ATP-binding positions include 9–10 and H17; that span reads SF. Positions 41, 74, and 88 each coordinate substrate. ATP contacts are provided by residues 89–91, E99, and 124–130; these read GLR and DSFISSS.

It belongs to the bacterial CoaD family. In terms of assembly, homohexamer. Mg(2+) serves as cofactor.

It is found in the cytoplasm. The catalysed reaction is (R)-4'-phosphopantetheine + ATP + H(+) = 3'-dephospho-CoA + diphosphate. It participates in cofactor biosynthesis; coenzyme A biosynthesis; CoA from (R)-pantothenate: step 4/5. Reversibly transfers an adenylyl group from ATP to 4'-phosphopantetheine, yielding dephospho-CoA (dPCoA) and pyrophosphate. The sequence is that of Phosphopantetheine adenylyltransferase from Lactobacillus gasseri (strain ATCC 33323 / DSM 20243 / BCRC 14619 / CIP 102991 / JCM 1131 / KCTC 3163 / NCIMB 11718 / NCTC 13722 / AM63).